Consider the following 292-residue polypeptide: Acetyl-coenzyme A carboxylase carboxyl transferase subunit beta (292 aa).

The CoA carboxyltransferase N-terminal domain occupies 36-292; the sequence is MWSKCEKCAK…LLRMHEVDYE (257 aa). Zn(2+) is bound by residues Cys-40, Cys-43, Cys-59, and Cys-62. A C4-type zinc finger spans residues 40–62; it reads CEKCAKILYTEDLRENFNVCPNC.

It belongs to the AccD/PCCB family. As to quaternary structure, acetyl-CoA carboxylase is a heterohexamer composed of biotin carboxyl carrier protein (AccB), biotin carboxylase (AccC) and two subunits each of ACCase subunit alpha (AccA) and ACCase subunit beta (AccD). Requires Zn(2+) as cofactor.

It localises to the cytoplasm. It carries out the reaction N(6)-carboxybiotinyl-L-lysyl-[protein] + acetyl-CoA = N(6)-biotinyl-L-lysyl-[protein] + malonyl-CoA. The protein operates within lipid metabolism; malonyl-CoA biosynthesis; malonyl-CoA from acetyl-CoA: step 1/1. Functionally, component of the acetyl coenzyme A carboxylase (ACC) complex. Biotin carboxylase (BC) catalyzes the carboxylation of biotin on its carrier protein (BCCP) and then the CO(2) group is transferred by the transcarboxylase to acetyl-CoA to form malonyl-CoA. In Clostridium perfringens (strain 13 / Type A), this protein is Acetyl-coenzyme A carboxylase carboxyl transferase subunit beta.